The primary structure comprises 718 residues: Sodium/myo-inositol cotransporter (718 aa).

The Extracellular segment spans residues 1-9; that stretch reads MRAVLETAD. The chain crosses the membrane as a helical span at residues 10–29; it reads IAIVALYFILVMCIGFFAMW. Over 30 to 38 the chain is Cytoplasmic; sequence KSNRSTVSG. Residues 39 to 57 traverse the membrane as a helical segment; sequence YFLAGRSMTWVAIGASLFV. The Extracellular portion of the chain corresponds to 58 to 86; that stretch reads SNIGSEHFIGLAGSGAASGFAVGAWEFNA. Residues 87-110 form a helical membrane-spanning segment; it reads LLLLQLLGWVFIPIYIRSGVYTMP. The Cytoplasmic segment spans residues 111–123; that stretch reads EYLSKRFGGHRIQ. Residues 124 to 144 form a helical membrane-spanning segment; that stretch reads VYFAALSLILYIFTKLSVDLY. Over 145 to 157 the chain is Extracellular; the sequence is SGALFIQESLGWN. A helical transmembrane segment spans residues 158 to 183; the sequence is LYVSVILLIGMTALLTVTGGLVAVIY. Topologically, residues 184–186 are cytoplasmic; it reads TDT. The chain crosses the membrane as a helical span at residues 187-205; sequence LQALLMIVGALTLMIISMM. At 206–303 the chain is on the extracellular side; it reads EIGGFEEVKR…HAKGSTLMAG (98 aa). The N-linked (GlcNAc...) asparagine glycan is linked to Asn-232. Residues 304–324 form a helical membrane-spanning segment; sequence FLKLLPMFIIVVPGMISRILF. Residues 325–353 lie on the Cytoplasmic side of the membrane; it reads ADDIACINPEHCMQVCGSRAGCSNIAYPR. The helical transmembrane segment at 354–376 threads the bilayer; it reads LVMKLVPVGLRGLMMAVMIAALM. Residues 377–406 lie on the Extracellular side of the membrane; that stretch reads SDLDSIFNSASTIFTLDVYKLIRRSASSRE. A helical transmembrane segment spans residues 407 to 430; sequence LMIVGRIFVAFMVVISIAWVPIIV. Over 431–443 the chain is Cytoplasmic; the sequence is EMQGGQMYLYIQE. A helical membrane pass occupies residues 444–462; that stretch reads VADYLTPPVAALFLLAIFW. The Extracellular segment spans residues 463 to 510; it reads KRCNEQGAFYGGMAGFVLGAVRLTLAFAYRAPECDQPDNRPGFIKDIH. A helical membrane pass occupies residues 511 to 532; it reads YMYVATALFWVTGLITVIVSLL. Over 533 to 695 the chain is Cytoplasmic; sequence TPPPTKEQIR…QMLEEPPQVK (163 aa). Ser-594 and Ser-632 each carry phosphoserine. The helical transmembrane segment at 696-716 threads the bilayer; it reads LILNIGLFAVCSLGIFMFVYF. The Extracellular portion of the chain corresponds to 717-718; it reads SL.

This sequence belongs to the sodium:solute symporter (SSF) (TC 2.A.21) family. As to quaternary structure, interacts with KCNQ2 (via the pore module). Interacts with KCNQ1; this interaction is direct. Forms coregulatory complexes with ion channels KCNQ2-KCNQ3 and KCNQ1-KCNE2. In terms of tissue distribution, kidney cortex and medulla.

It is found in the apical cell membrane. Its subcellular location is the basolateral cell membrane. The enzyme catalyses myo-inositol(out) + 2 Na(+)(out) = myo-inositol(in) + 2 Na(+)(in). It carries out the reaction scyllo-inositol(out) + 2 Na(+)(out) = scyllo-inositol(in) + 2 Na(+)(in). With respect to regulation, inhibited by phlorizin and phloretin. Its function is as follows. Electrogenic Na(+)-coupled sugar symporter that actively transports myo-inositol and its stereoisomer scyllo-inositol across the plasma membrane, with a Na(+) to sugar coupling ratio of 2:1. Maintains myo-inositol concentration gradient that defines cell volume and fluid balance during osmotic stress, in particular in the fetoplacental unit and central nervous system. Forms coregulatory complexes with voltage-gated K(+) ion channels, allosterically altering ion selectivity, voltage dependence and gating kinetics of the channel. In turn, K(+) efflux through the channel forms a local electrical gradient that modulates electrogenic Na(+)-coupled myo-inositol influx through the transporter. Associates with KCNQ1-KCNE2 channel in the apical membrane of choroid plexus epithelium and regulates the myo-inositol gradient between blood and cerebrospinal fluid with an impact on neuron excitability. Associates with KCNQ2-KCNQ3 channel altering ion selectivity, increasing Na(+) and Cs(+) permeation relative to K(+) permeation. Provides myo-inositol precursor for biosynthesis of phosphoinositides such as PI(4,5)P2, thus indirectly affecting the activity of phosphoinositide-dependent ion channels and Ca(2+) signaling upon osmotic stress. Has very low affinity for sugars such as L-fucose and L-xylose, with an affinity about three orders of magnitude lower than myo-inositol. In Canis lupus familiaris (Dog), this protein is Sodium/myo-inositol cotransporter (SLC5A3).